The chain runs to 245 residues: RNA polymerase sigma factor SigI5 (245 aa).

A Polymerase core binding motif is present at residues 60–73 (DEYSIGLMAFNEAI). Positions 202 to 221 (MKELSKIIDVHPKTVERNRA) form a DNA-binding region, H-T-H motif.

Belongs to the sigma-70 factor family. SigI subfamily. As to quaternary structure, interacts with RsgI5.

The protein resides in the cytoplasm. With respect to regulation, negatively regulated by the anti-sigma-I factor RsgI5. Binding of the polysaccharide substrate to RsgI5 may lead to the release and activation of SigI5. In terms of biological role, sigma factors are initiation factors that promote the attachment of RNA polymerase to specific initiation sites and are then released. This sigma factor is involved in regulation of cellulosomal genes via an external polysaccharide-sensing mechanism. The polypeptide is RNA polymerase sigma factor SigI5 (Acetivibrio thermocellus (strain ATCC 27405 / DSM 1237 / JCM 9322 / NBRC 103400 / NCIMB 10682 / NRRL B-4536 / VPI 7372) (Clostridium thermocellum)).